A 349-amino-acid chain; its full sequence is UPF0324 inner membrane protein YeiH (349 aa).

Residues 1 to 12 are Periplasmic-facing; the sequence is MTELTLQNHRRT. Residues 13–35 traverse the membrane as a helical segment; sequence MWHFIPGLALSAVITGVALWGGA. Residues 36–38 lie on the Cytoplasmic side of the membrane; that stretch reads IPA. A helical membrane pass occupies residues 39–61; that stretch reads VAGAGFSALTLAILLGMVIGNTV. At 62 to 99 the chain is on the periplasmic side; the sequence is YPQIWKQCDGGVLFAKQHLLRLGIILYGFRLTFSQIAD. Residues 100 to 122 traverse the membrane as a helical segment; that stretch reads VGISGIVIDVLTLSSTFMLACFL. Topologically, residues 123–131 are cytoplasmic; that stretch reads GQKVFGLDR. Residues 132–151 form a helical membrane-spanning segment; sequence HTSWLIGAGSSICGAAAVLA. Residues 152-162 are Periplasmic-facing; sequence TEPVVKAEASK. Residues 163–185 traverse the membrane as a helical segment; the sequence is VTVAVATVVIFGTIAIFLYPAMY. The Cytoplasmic segment spans residues 186–261; it reads PLLAHWFSPE…SPATGAEKSK (76 aa). Residues 262-284 traverse the membrane as a helical segment; sequence ITIPWFAIFFIVVAIFNSFHLLP. Topologically, residues 285 to 290 are periplasmic; the sequence is KAVVDM. Residues 291-313 form a helical membrane-spanning segment; sequence LVTLDTVLLAMAMAALGLTTHVS. Over 314-322 the chain is Cytoplasmic; that stretch reads ALKKAGAKP. A helical membrane pass occupies residues 323–345; the sequence is LLMALALFAWLIIGGGAINVLIH. Residues 346–349 are Periplasmic-facing; it reads SLIA.

It belongs to the UPF0324 family.

The protein resides in the cell inner membrane. The sequence is that of UPF0324 inner membrane protein YeiH (yeiH) from Salmonella typhi.